A 471-amino-acid polypeptide reads, in one-letter code: Probable nucleoredoxin 3 (471 aa).

2 Thioredoxin domains span residues 15–173 and 179–334; these read VSIP…ARRQ and QLLG…KERD.

The protein belongs to the nucleoredoxin family.

It catalyses the reaction [protein]-dithiol + NAD(+) = [protein]-disulfide + NADH + H(+). The enzyme catalyses [protein]-dithiol + NADP(+) = [protein]-disulfide + NADPH + H(+). Its function is as follows. Probable thiol-disulfide oxidoreductase that may participate in various redox reactions. This chain is Probable nucleoredoxin 3, found in Oryza sativa subsp. japonica (Rice).